Consider the following 418-residue polypeptide: Elongation factor 1-gamma 2 (418 aa).

Positions 1–82 constitute a GST N-terminal domain; that stretch reads MALVLHAGSG…YVTRSKADNP (82 aa). A GST C-terminal domain is found at 87 to 215; that stretch reads SLIEYAHIEQ…VKQAESVPPV (129 aa). The interval 210–265 is disordered; it reads ESVPPVQKKAPPPKEQKPKEAKKEAPKEAPKPKAVEKPEEEEEAPKPKPKNPLDLL. Basic and acidic residues predominate over residues 221 to 246; sequence PPKEQKPKEAKKEAPKEAPKPKAVEK. The EF-1-gamma C-terminal domain maps to 258-418; sequence PKNPLDLLPP…ESLLDAKCFK (161 aa).

In terms of assembly, EF-1 is composed of four subunits: alpha, beta, delta, and gamma.

Its function is as follows. Probably plays a role in anchoring the complex to other cellular components. In Oryza sativa subsp. japonica (Rice), this protein is Elongation factor 1-gamma 2.